A 337-amino-acid polypeptide reads, in one-letter code: MNRFILLALVAAVVAVNSAKLSRQIESAIEKWDDYKEDFDKEYSESEEQTYMEAFVKNMIHIENHNRDHRLGRKTFEMGLNHIADLPFSQYRKLNGYRRLFGDSRIKNSSSFLAPFNVQVPDEVDWRDTHLVTDVKNQGMCGSCWAFSATGALEGQHARKLGQLVSLSEQNLVDCSTKYGNHGCNGGLMDQAFEYIRDNHGVDTEESYPYKGRDMKCHFNKKTVGADDKGYVDTPEGDEEQLKIAVATQGPISIAIDAGHRSFQLYKKGVYYDEECSSEELDHGVLLVGYGTDPEHGDYWIVKNSWGAGWGEKGYIRIARNRNNHCGVATKASYPLV.

Residues 1–18 (MNRFILLALVAAVVAVNS) form the signal peptide. Positions 19 to 119 (AKLSRQIESA…SSFLAPFNVQ (101 aa)) are cleaved as a propeptide — activation peptide. N-linked (GlcNAc...) asparagine glycosylation is present at Asn108. Cystine bridges form between Cys141–Cys184, Cys175–Cys217, and Cys276–Cys326. Cys144 is an active-site residue. Active-site residues include His283 and Asn304.

Belongs to the peptidase C1 family. In terms of tissue distribution, expressed in intestine, pharynx posterior bulb, hypodermis and cuticle (at protein level). Expressed in germ cells, developing oocytes, sheath cells surrounding germ cells and oocytes, and in the eggshell (at protein level).

The protein resides in the secreted. It localises to the cytoplasmic granule. It is found in the lysosome. Its subcellular location is the endosome. The protein localises to the cytoplasmic vesicle. The protein resides in the phagosome. It catalyses the reaction Specificity close to that of papain. As compared to cathepsin B, cathepsin L exhibits higher activity toward protein substrates, but has little activity on Z-Arg-Arg-NHMec, and no peptidyl-dipeptidase activity.. In terms of biological role, cysteine protease which plays an essential role in the degradation of proteins in lysosomes. During early embryogenesis, maternally required for the proteolytic processing of yolk proteins in platelets, a lysosome-like structure where a slow and controlled degradation of yolk proteins occurs. In the gonad, required for the clearance of apoptotic germ cells in the engulfing cell phagolysosomes. In embryos, required for the degradation of endocytic and autophagic cargos. In embryos, may play a role in the degradation of lipid-containing droplets. Required for larval development. In Caenorhabditis elegans, this protein is Cathepsin L-like.